Consider the following 141-residue polypeptide: Large ribosomal subunit protein uL11 (141 aa).

It belongs to the universal ribosomal protein uL11 family. Part of the ribosomal stalk of the 50S ribosomal subunit. Interacts with L10 and the large rRNA to form the base of the stalk. L10 forms an elongated spine to which L12 dimers bind in a sequential fashion forming a multimeric L10(L12)X complex. Post-translationally, one or more lysine residues are methylated.

In terms of biological role, forms part of the ribosomal stalk which helps the ribosome interact with GTP-bound translation factors. The protein is Large ribosomal subunit protein uL11 of Tropheryma whipplei (strain TW08/27) (Whipple's bacillus).